Consider the following 177-residue polypeptide: Biotin-dependent acetyl-/propionyl-coenzyme A carboxylase epsilon subunit (177 aa).

The tract at residues 1–112 (MGTCPCESSE…TEKPLHPHEP (112 aa)) is disordered. Polar residues predominate over residues 18–100 (VSGTNEVSDG…SDGNETNNPA (83 aa)).

As to quaternary structure, interacts with the AccA3/AccD5 biotin-dependent acyl-CoA carboxylase complex. Interacts with the AccA3/AccD6 complex. Is also part of the long-chain acyl-CoA carboxylase (LCC) complex, which is composed of AccA3, AccD4, AccD5 and AccE5. The four subunits are essential for activity, but AccD5, together with AccE5, probably plays a structural role rather than a catalytic one.

In terms of biological role, stimulates activity of the AccA3/AccD5 biotin-dependent acyl-CoA carboxylase complex. Interacts with AccD5 and modulates its carboxylase activity for acetyl-CoA and propionyl-CoA. Inhibits activity of the AccA3/AccD6 complex. Is also required for the activity of the long-chain acyl-CoA carboxylase (LCC) complex. This Mycobacterium tuberculosis (strain ATCC 25618 / H37Rv) protein is Biotin-dependent acetyl-/propionyl-coenzyme A carboxylase epsilon subunit.